A 76-amino-acid polypeptide reads, in one-letter code: U-scoloptoxin(15)-Ssd3b (76 aa).

An N-terminal signal peptide occupies residues 1–23 (MEKKIIFLCFLVALLTFPEFISS).

Post-translationally, contains 2 disulfide bonds. As to expression, expressed by the venom gland.

The protein localises to the secreted. The chain is U-scoloptoxin(15)-Ssd3b from Scolopendra dehaani (Thai centipede).